Here is a 154-residue protein sequence, read N- to C-terminus: 6,7-dimethyl-8-ribityllumazine synthase (154 aa).

Residues Phe22, Ala56–Glu58, and Val81–Ile83 contribute to the 5-amino-6-(D-ribitylamino)uracil site. Glu86–Thr87 provides a ligand contact to (2S)-2-hydroxy-3-oxobutyl phosphate. His89 acts as the Proton donor in catalysis. Phe114 contacts 5-amino-6-(D-ribitylamino)uracil. Arg128 provides a ligand contact to (2S)-2-hydroxy-3-oxobutyl phosphate.

It belongs to the DMRL synthase family.

It catalyses the reaction (2S)-2-hydroxy-3-oxobutyl phosphate + 5-amino-6-(D-ribitylamino)uracil = 6,7-dimethyl-8-(1-D-ribityl)lumazine + phosphate + 2 H2O + H(+). It participates in cofactor biosynthesis; riboflavin biosynthesis; riboflavin from 2-hydroxy-3-oxobutyl phosphate and 5-amino-6-(D-ribitylamino)uracil: step 1/2. In terms of biological role, catalyzes the formation of 6,7-dimethyl-8-ribityllumazine by condensation of 5-amino-6-(D-ribitylamino)uracil with 3,4-dihydroxy-2-butanone 4-phosphate. This is the penultimate step in the biosynthesis of riboflavin. The protein is 6,7-dimethyl-8-ribityllumazine synthase of Chlamydia abortus (strain DSM 27085 / S26/3) (Chlamydophila abortus).